The following is a 258-amino-acid chain: Regulatory protein RecX (258 aa).

It belongs to the RecX family.

It localises to the cytoplasm. Its function is as follows. Modulates RecA activity. The chain is Regulatory protein RecX from Streptococcus pneumoniae (strain P1031).